Here is a 200-residue protein sequence, read N- to C-terminus: Holliday junction branch migration complex subunit RuvA (200 aa).

The segment at 1–64 (MFTYFRGELI…EDLMQLFGFL (64 aa)) is domain I. A domain II region spans residues 65 to 143 (EEEERQLFRL…KLRPSGGTKS (79 aa)). Residues 144–148 (VSRLS) form a flexible linker region. Positions 148–200 (SESSMRDDAVNALVTLGFLRSVAQKAVTESLTSLRNPQVEDLVRDALLTIRTP) are domain III.

It belongs to the RuvA family. In terms of assembly, homotetramer. Forms an RuvA(8)-RuvB(12)-Holliday junction (HJ) complex. HJ DNA is sandwiched between 2 RuvA tetramers; dsDNA enters through RuvA and exits via RuvB. An RuvB hexamer assembles on each DNA strand where it exits the tetramer. Each RuvB hexamer is contacted by two RuvA subunits (via domain III) on 2 adjacent RuvB subunits; this complex drives branch migration. In the full resolvosome a probable DNA-RuvA(4)-RuvB(12)-RuvC(2) complex forms which resolves the HJ.

The protein localises to the cytoplasm. Functionally, the RuvA-RuvB-RuvC complex processes Holliday junction (HJ) DNA during genetic recombination and DNA repair, while the RuvA-RuvB complex plays an important role in the rescue of blocked DNA replication forks via replication fork reversal (RFR). RuvA specifically binds to HJ cruciform DNA, conferring on it an open structure. The RuvB hexamer acts as an ATP-dependent pump, pulling dsDNA into and through the RuvAB complex. HJ branch migration allows RuvC to scan DNA until it finds its consensus sequence, where it cleaves and resolves the cruciform DNA. The sequence is that of Holliday junction branch migration complex subunit RuvA from Chlorobium phaeobacteroides (strain BS1).